We begin with the raw amino-acid sequence, 370 residues long: Aminomethyltransferase (370 aa).

The protein belongs to the GcvT family. As to quaternary structure, the glycine cleavage system is composed of four proteins: P, T, L and H.

It carries out the reaction N(6)-[(R)-S(8)-aminomethyldihydrolipoyl]-L-lysyl-[protein] + (6S)-5,6,7,8-tetrahydrofolate = N(6)-[(R)-dihydrolipoyl]-L-lysyl-[protein] + (6R)-5,10-methylene-5,6,7,8-tetrahydrofolate + NH4(+). The glycine cleavage system catalyzes the degradation of glycine. This chain is Aminomethyltransferase, found in Clostridium botulinum (strain Okra / Type B1).